We begin with the raw amino-acid sequence, 304 residues long: Cell surface-binding protein OPG105 (304 aa).

This sequence belongs to the alpha-carbonic anhydrase family. As to quaternary structure, homodimer; disulfide-linked. In terms of processing, apparently non-glycosylated.

The protein localises to the virion membrane. Binds to chondroitin sulfate on the cell surface to provide virion attachment to target cell. This is Cell surface-binding protein OPG105 (OPG105) from Monkeypox virus.